Reading from the N-terminus, the 306-residue chain is HORMA domain-containing protein 2 (306 aa).

An HORMA domain is found at 29 to 232; that stretch reads HESLVVVKKL…SGFHSMKVKV (204 aa). S271 is subject to Phosphoserine.

As to quaternary structure, interacts with HORMAD1. Phosphorylated in a SPO11-dependent manner. Specifically expressed in meiotic germ cells.

It is found in the nucleus. The protein localises to the chromosome. Functionally, essential for synapsis surveillance during meiotic prophase via the recruitment of ATR activity. Plays a key role in the male mid-pachytene checkpoint and the female meiotic prophase checkpoint: required for efficient build-up of ATR activity on unsynapsed chromosome regions, a process believed to form the basis of meiotic silencing of unsynapsed chromatin (MSUC) and meiotic prophase quality control in both sexes. Required for the DNA double-strand break-independent, BRCA1-dependent activation of ATR on the sex chromosomes that is essential for normal sex body formation. This is HORMA domain-containing protein 2 (Hormad2) from Mus musculus (Mouse).